A 763-amino-acid polypeptide reads, in one-letter code: Protein translocase subunit SecA 2 (763 aa).

ATP contacts are provided by residues Gln-83, 101–105 (GEGKT), and Asp-490.

The protein belongs to the SecA family. As to quaternary structure, monomer and homodimer. Part of the essential Sec protein translocation apparatus which comprises SecA, SecYEG and auxiliary proteins SecDF. Other proteins may also be involved.

Its subcellular location is the cell membrane. The protein resides in the cytoplasm. The enzyme catalyses ATP + H2O + cellular proteinSide 1 = ADP + phosphate + cellular proteinSide 2.. Functionally, part of the Sec protein translocase complex. Interacts with the SecYEG preprotein conducting channel. Has a central role in coupling the hydrolysis of ATP to the transfer of proteins into and across the cell membrane, serving as an ATP-driven molecular motor driving the stepwise translocation of polypeptide chains across the membrane. This is Protein translocase subunit SecA 2 from Corynebacterium glutamicum (strain R).